A 1209-amino-acid chain; its full sequence is Protein phosphatase 1 regulatory subunit 26 (1209 aa).

Disordered stretches follow at residues 57 to 91, 145 to 279, 291 to 471, 501 to 532, 555 to 694, 733 to 836, 848 to 1033, 1052 to 1072, and 1118 to 1209; these read DGAA…TVHK, SGAA…HRQG, KPPR…VERS, GSDG…DSDD, GESC…EDLD, EQLG…SNDS, KAKE…FAHQ, RGGV…GLPS, and AFRE…VVKV. A compositionally biased stretch (basic and acidic residues) spans 63–91; the sequence is TSDERAAQRGHRAEGCHDARPAAKPTVHK. Over residues 201–219 the composition is skewed to low complexity; it reads QVGSSKDQGSASPVSVSSD. The span at 226–255 shows a compositional bias: basic and acidic residues; that stretch reads IRAEIEQFLNEKRQHETQKCDGSVEKKPDT. Residues 301–321 are compositionally biased toward polar residues; the sequence is QPRSLRSKVTTTQENEGSTKP. The span at 352-362 shows a compositional bias: low complexity; the sequence is SAAQASEASDS. A compositionally biased stretch (basic and acidic residues) spans 442–454; sequence DTDHAPKLLKETK. 3 stretches are compositionally biased toward basic and acidic residues: residues 609-637, 667-685, and 757-766; these read KMQE…RRDL, KTDE…DKSS, and SKRDSGEGPG. 2 stretches are compositionally biased toward low complexity: residues 821–836 and 852–861; these read PGSL…SNDS and SVSSSEVQAE. At S1161 the chain carries Phosphoserine. Positions 1187–1209 are enriched in low complexity; sequence GSDASDFSDTSTEDSGGSSVVKV.

Interacts with UTP20 and PPP1CA. As to expression, ubiquitous in normal tissues. Expressed in numerous adenocarcinoma cell lines.

The protein resides in the nucleus. Its subcellular location is the nucleolus. Functionally, inhibits phosphatase activity of protein phosphatase 1 (PP1) complexes. May positively regulate cell proliferation. This is Protein phosphatase 1 regulatory subunit 26 (PPP1R26) from Homo sapiens (Human).